The following is a 317-amino-acid chain: tRNA-cytidine(32) 2-sulfurtransferase (317 aa).

A PP-loop motif motif is present at residues 63–68; sequence SGGKDS. Positions 138, 141, and 229 each coordinate [4Fe-4S] cluster.

The protein belongs to the TtcA family. In terms of assembly, homodimer. Mg(2+) is required as a cofactor. The cofactor is [4Fe-4S] cluster.

It localises to the cytoplasm. The catalysed reaction is cytidine(32) in tRNA + S-sulfanyl-L-cysteinyl-[cysteine desulfurase] + AH2 + ATP = 2-thiocytidine(32) in tRNA + L-cysteinyl-[cysteine desulfurase] + A + AMP + diphosphate + H(+). The protein operates within tRNA modification. Catalyzes the ATP-dependent 2-thiolation of cytidine in position 32 of tRNA, to form 2-thiocytidine (s(2)C32). The sulfur atoms are provided by the cysteine/cysteine desulfurase (IscS) system. In Janthinobacterium sp. (strain Marseille) (Minibacterium massiliensis), this protein is tRNA-cytidine(32) 2-sulfurtransferase.